Reading from the N-terminus, the 137-residue chain is Universal stress protein in QAH/OAS sulfhydrylase 3'region (137 aa).

The protein belongs to the universal stress protein A family.

This is Universal stress protein in QAH/OAS sulfhydrylase 3'region from Thermus aquaticus.